The primary structure comprises 177 residues: Nucleoside-triphosphatase THEP1 (177 aa).

ATP is bound by residues Gly-10 to Thr-17 and Cys-101 to Gly-108.

It belongs to the THEP1 NTPase family.

The enzyme catalyses a ribonucleoside 5'-triphosphate + H2O = a ribonucleoside 5'-diphosphate + phosphate + H(+). Its function is as follows. Has nucleotide phosphatase activity towards ATP, GTP, CTP, TTP and UTP. May hydrolyze nucleoside diphosphates with lower efficiency. The protein is Nucleoside-triphosphatase THEP1 of Natranaerobius thermophilus (strain ATCC BAA-1301 / DSM 18059 / JW/NM-WN-LF).